A 497-amino-acid polypeptide reads, in one-letter code: Di-/tripeptide transporter (497 aa).

12 helical membrane passes run 3 to 23 (AILL…MSQT), 26 to 46 (ASIM…GGWL), 57 to 77 (VFYG…PAGV), 84 to 104 (IALI…MVGG), 119 to 139 (IFVF…PWAA), 155 to 175 (AGFS…VLGG), 199 to 219 (IKWV…MAGV), 227 to 247 (VITL…VMMF), 294 to 314 (FIIL…KVII), 321 to 341 (LVLL…TFVL), 372 to 392 (GIEI…LIIL), and 452 to 472 (IVII…WSYI).

Belongs to the major facilitator superfamily. Proton-dependent oligopeptide transporter (POT/PTR) (TC 2.A.17) family.

Its subcellular location is the cell membrane. Functionally, proton-dependent uptake of di- or tri-peptides. In Lactobacillus helveticus (Lactobacillus suntoryeus), this protein is Di-/tripeptide transporter (dtpT).